The following is a 124-amino-acid chain: Small ribosomal subunit protein uS12 (124 aa).

The residue at position 89 (aspartate 89) is a 3-methylthioaspartic acid. Residues 105–124 (QGVKNRKQARSKYGAKMEKK) form a disordered region.

Belongs to the universal ribosomal protein uS12 family. Part of the 30S ribosomal subunit. Contacts proteins S8 and S17. May interact with IF1 in the 30S initiation complex.

Its function is as follows. With S4 and S5 plays an important role in translational accuracy. Interacts with and stabilizes bases of the 16S rRNA that are involved in tRNA selection in the A site and with the mRNA backbone. Located at the interface of the 30S and 50S subunits, it traverses the body of the 30S subunit contacting proteins on the other side and probably holding the rRNA structure together. The combined cluster of proteins S8, S12 and S17 appears to hold together the shoulder and platform of the 30S subunit. The chain is Small ribosomal subunit protein uS12 from Renibacterium salmoninarum (strain ATCC 33209 / DSM 20767 / JCM 11484 / NBRC 15589 / NCIMB 2235).